The following is a 361-amino-acid chain: [LysW]-lysine hydrolase (361 aa).

H67 contributes to the Zn(2+) binding site. D69 is an active-site residue. D91 is a binding site for Zn(2+). E124 acts as the Proton acceptor in catalysis. Residues E125, E148, and H326 each coordinate Zn(2+).

The protein belongs to the peptidase M20A family. LysK subfamily. Zn(2+) serves as cofactor. Requires Co(2+) as cofactor.

The protein resides in the cytoplasm. It carries out the reaction [amino-group carrier protein]-C-terminal-gamma-(L-lysyl)-L-glutamate + H2O = [amino-group carrier protein]-C-terminal-L-glutamate + L-lysine. It functions in the pathway amino-acid biosynthesis; L-lysine biosynthesis via AAA pathway; L-lysine from L-alpha-aminoadipate (Thermus route): step 5/5. Its function is as follows. Catalyzes the release of L-lysine from [LysW]-gamma-L-lysine. This chain is [LysW]-lysine hydrolase, found in Thermus thermophilus (strain ATCC 27634 / DSM 579 / HB8).